A 236-amino-acid polypeptide reads, in one-letter code: Small ribosomal subunit protein eS6 (236 aa).

Phosphoserine occurs at positions 232 and 233.

This sequence belongs to the eukaryotic ribosomal protein eS6 family. Post-translationally, phosphorylated.

This chain is Small ribosomal subunit protein eS6 (RPS6), found in Debaryomyces hansenii (strain ATCC 36239 / CBS 767 / BCRC 21394 / JCM 1990 / NBRC 0083 / IGC 2968) (Yeast).